Here is a 1453-residue protein sequence, read N- to C-terminus: DNA mismatch repair protein Mlh3 (1453 aa).

Disordered regions lie at residues 624–650 (EHSFKNYVRPGPTRAQETFGNRTRHSV) and 933–960 (GVIPTSDSATQDNSFNKNSKTHSNSNTT). The segment covering 935 to 944 (IPTSDSATQD) has biased composition (polar residues). The segment covering 945–960 (NSFNKNSKTHSNSNTT) has biased composition (low complexity).

This sequence belongs to the DNA mismatch repair MutL/HexB family. Heterodimer of MLH1 and MLH3. Interacts with MTMR15/FAN1. Ubiquitous.

The protein localises to the nucleus. In terms of biological role, probably involved in the repair of mismatches in DNA. This is DNA mismatch repair protein Mlh3 (MLH3) from Homo sapiens (Human).